The chain runs to 310 residues: p-hydroxybenzoic acid efflux pump subunit AaeA (310 aa).

Residues 12–32 (AITVALVILAFIAISRAWVFY) form a helical membrane-spanning segment.

This sequence belongs to the membrane fusion protein (MFP) (TC 8.A.1) family.

The protein localises to the cell inner membrane. Forms an efflux pump with AaeB. This chain is p-hydroxybenzoic acid efflux pump subunit AaeA, found in Enterobacter sp. (strain 638).